Here is a 76-residue protein sequence, read N- to C-terminus: MKVAIIILSLALVAAVFADQNCDIGNITSQCQMQHKNCEDANGCDTIIEECKTSMVERCQNQEFESAAGSTTLGPQ.

The first 18 residues, 1–18 (MKVAIIILSLALVAAVFA), serve as a signal peptide directing secretion. Disulfide bonds link C22–C59, C31–C51, and C38–C44. N26 carries an N-linked (GlcNAc...) asparagine glycan.

Binds to temptin and enticin. As to expression, produced by the albumen gland of the egg cordons.

It is found in the secreted. In terms of biological role, water-borne pheromone that attract the marine mollusk Aplysia into breeding aggregations and coordinate male and female reproductive behavior within the aggregation. In Aplysia californica (California sea hare), this protein is Attractin (ATT).